Here is a 418-residue protein sequence, read N- to C-terminus: Putative ion-transport protein YfeO (418 aa).

A run of 12 helical transmembrane segments spans residues 10–30 (LLLS…LIVV), 54–74 (DSPL…GLVI), 99–119 (ALPG…SLGP), 120–140 (EHPI…RLLP), 149–169 (ILAS…AALI), 186–206 (LFAP…FFHP), 223–243 (ILSG…AVWC), 258–278 (VLVL…GGPV), 300–320 (DYFL…ASGF), 322–342 (GGRI…LHEH), 343–363 (VPAV…VLVV), and 371–391 (LFMA…CIVM).

This sequence belongs to the chloride channel (TC 2.A.49) family.

Its subcellular location is the cell membrane. This is Putative ion-transport protein YfeO from Shigella boydii serotype 18 (strain CDC 3083-94 / BS512).